Consider the following 82-residue polypeptide: Chaplin-E (82 aa).

Residues methionine 1 to alanine 27 form the signal peptide. The Chaplin domain occupies serine 41 to asparagine 81.

The protein belongs to the chaplin family. Short chaplin subfamily.

The protein resides in the cell surface. It localises to the secreted. The protein localises to the cell wall. Its subcellular location is the fimbrium. Functionally, one of 8 partially redundant surface-active proteins required for efficient formation of aerial mycelium; the short chaplins assemble into a hydrophobic, amyloidal fibrillar surface layer that envelopes and protects aerial hyphae and spores, presumably anchored to the long chaplins. Chaplins have an overlapping function with the surface-active SapB peptide; chaplins are essential on minimal medium while on rich medium both chaplins and SapB are required for efficient aerial hyphae formation. Chaplins are also involved in cell attachment to a hydrophobic surface. Forms amyloid fibrils in vitro probably composed of stacked beta-sheets, at low extracellular concentrations individually restores the ability to form aerial hyphae to a chaplin-deficient strain, but does so less well than other short chaplins. A small chaplin extract (ChpD, ChpE, ChpF, ChpG and ChpH) self-assembles into 2 different amyloids; small fibrils at the air-water interface form an amphipathic membrane that resembles spore-surface structures involved in aerial hyphae formation, and hydrophilic fibrils in solution that resemble the fibers that attach cells to a hydrophobic surface. At the air-water interface the hydrophilic surface is in contact with water (probably equivalent to the peptidoglycan layer), while the hydrophobic face is exposed to the air, making the surface of the aerial hyphae hydrophobic. A minimal chaplin strain capable of forming aerial mycelium/hyphae on minimal medium contains ChpC, ChpE and ChpH. The strain also has restored rodlet formation on the hyphae surface. A second strain with ChpA, ChpD and ChpE makes slightly less robust hyphae. This essential chaplin may coordinate the assembly and/or polymerization of the other chaplins. A small chaplin extract applied to a chaplin-deficient strain restores aerial hyphae formation. The small chaplin extract forms an amyloid-like structure similar to that seen on the surface of cells without rodlets (rdlA-rdlB deletions), and is highly surface active, reducing surface tension from 72 to 26 mJ/m(2), which probably allows escape of hyphae from an aqueous environment into air. This is Chaplin-E from Streptomyces coelicolor (strain ATCC BAA-471 / A3(2) / M145).